The sequence spans 81 residues: uncharacterized protein (81 aa).

Transmembrane regions (helical) follow at residues 10 to 30 (FFVL…FLLL) and 56 to 76 (VLYL…AFAI).

It is found in the host membrane. This is an uncharacterized protein from Acidianus two-tailed virus (ATV).